The primary structure comprises 346 residues: Elongation factor Ts (346 aa).

Residues 80–83 (TDFV) form an involved in Mg(2+) ion dislocation from EF-Tu region.

The protein belongs to the EF-Ts family.

It localises to the cytoplasm. In terms of biological role, associates with the EF-Tu.GDP complex and induces the exchange of GDP to GTP. It remains bound to the aminoacyl-tRNA.EF-Tu.GTP complex up to the GTP hydrolysis stage on the ribosome. The protein is Elongation factor Ts of Streptococcus pneumoniae (strain 70585).